Consider the following 108-residue polypeptide: TYRO protein tyrosine kinase-binding protein (108 aa).

A signal peptide spans 1–25 (MGRLGPSNGLLPLLLAVGGFSLVQA). The Extracellular portion of the chain corresponds to 26 to 36 (QRECSCSAVSP). A helical membrane pass occupies residues 37 to 57 (GILAGIVLGDLVLTLLIALAV). Aspartate 46 is a binding site for Ca(2+). The Cytoplasmic portion of the chain corresponds to 58 to 108 (YSLGRLVPRTRGAVDVTRKQHIAETESAYQELQGQRSDVYSDLNTQRQYYK). An ITAM domain is found at 75 to 103 (RKQHIAETESAYQELQGQRSDVYSDLNTQ). Phosphotyrosine occurs at positions 86 and 97.

This sequence belongs to the TYROBP family. In terms of assembly, homodimer; disulfide-linked. Homotrimer; disulfide-linked. Homotetramer; disulfide-linked. Homotrimers and homotetramers form when low levels of partner receptors are available and is competitive with assembly with interacting receptors. They may represent alternative oligomerization states or may be intermediates in the receptor assembly process. Binding of a metal cation aids in homooligomerization through coordination of the metal ion by the subunits of the oligomer. Interacts with TREM1. Interacts with TREM2. Interacts with CLECSF5. Interacts with CD300LB and CD300C2. Interacts with CD300E. Interacts (via ITAM domain) with SYK (via SH2 domains); activates SYK mediating neutrophils and macrophages integrin-mediated activation. Interacts with KLRC2. Interacts with CD300H. Interacts with KLRD1. Interacts with SIGLEC1. Post-translationally, following ligand binding by associated receptors, tyrosine phosphorylated in the ITAM domain which leads to activation of additional tyrosine kinases and subsequent cell activation. Highly expressed in spleen, liver and thymus. Weakly expressed in lymph nodes. Expressed in peripheral blood leukocytes, granulocytes, macrophages, and monocytes. LPS does not increase expression in granulocytes.

The protein localises to the cell membrane. Functionally, adapter protein which non-covalently associates with activating receptors found on the surface of a variety of immune cells to mediate signaling and cell activation following ligand binding by the receptors. TYROBP is tyrosine-phosphorylated in the ITAM domain following ligand binding by the associated receptors which leads to activation of additional tyrosine kinases and subsequent cell activation. Also has an inhibitory role in some cells. Non-covalently associates with activating receptors of the CD300 family to mediate cell activation. Also mediates cell activation through association with activating receptors of the CD200R family. Required for neutrophil activation mediated by integrin. Required for the activation of myeloid cells mediated by the CLEC5A/MDL1 receptor. Associates with natural killer (NK) cell receptors such as the KLRD1/KLRC2 heterodimer to mediate NK cell activation. Associates with TREM1 to mediate activation of neutrophils and monocytes. Associates with TREM2 on monocyte-derived dendritic cells to mediate up-regulation of chemokine receptor CCR7 and dendritic cell maturation and survival. Association with TREM2 mediates cytokine-induced formation of multinucleated giant cells which are formed by the fusion of macrophages. Stabilizes the TREM2 C-terminal fragment (TREM2-CTF) produced by TREM2 ectodomain shedding which suppresses the release of pro-inflammatory cytokines. In microglia, required with TREM2 for phagocytosis of apoptotic neurons. Required with ITGAM/CD11B in microglia to control production of microglial superoxide ions which promote the neuronal apoptosis that occurs during brain development. Promotes pro-inflammatory responses in microglia following nerve injury which accelerates degeneration of injured neurons. Positively regulates the expression of the IRAK3/IRAK-M kinase and IL10 production by liver dendritic cells and inhibits their T cell allosimulatory ability. Negatively regulates B cell proliferation. Required for CSF1-mediated osteoclast cytoskeletal organization. Positively regulates multinucleation during osteoclast development. This chain is TYRO protein tyrosine kinase-binding protein, found in Sus scrofa (Pig).